A 364-amino-acid chain; its full sequence is Medium-wave-sensitive opsin 1 (364 aa).

The segment at Met1–Gln24 is disordered. Over Met1–Val52 the chain is Extracellular. The segment at Asp17–Pro43 is required for 11-cis-retinal regeneration. Asn34 carries N-linked (GlcNAc...) asparagine glycosylation. The helical transmembrane segment at Tyr53–Ala77 threads the bilayer. The Cytoplasmic portion of the chain corresponds to Thr78–Asn89. The chain crosses the membrane as a helical span at residues Trp90–Leu115. Residues Tyr116–Glu129 lie on the Extracellular side of the membrane. Cys126 and Cys203 are disulfide-bonded. A helical transmembrane segment spans residues Gly130–Trp149. Residues Glu150–Leu168 lie on the Cytoplasmic side of the membrane. A helical transmembrane segment spans residues Ala169 to Ser192. Residues Arg193–Ser218 lie on the Extracellular side of the membrane. Residues Tyr219 to Ile246 form a helical membrane-spanning segment. The Cytoplasmic portion of the chain corresponds to Arg247–Arg268. Residues Met269–Thr292 traverse the membrane as a helical segment. The Extracellular segment spans residues Ala293–His300. A helical membrane pass occupies residues Pro301 to Ile320. Lys312 is subject to N6-(retinylidene)lysine. At Ile321–Ala364 the chain is on the cytoplasmic side.

The protein belongs to the G-protein coupled receptor 1 family. Opsin subfamily. Monomer. Homodimer. Homotetramer. In terms of processing, O-glycosylated. Phosphorylated on some or all of the serine and threonine residues present in the C-terminal region. As to expression, expressed in cone photoreceptor cells.

It is found in the membrane. In terms of biological role, visual pigments are the light-absorbing molecules that mediate vision. They consist of an apoprotein, opsin, covalently linked to cis-retinal. May increase spectral sensitivity in dim light. This chain is Medium-wave-sensitive opsin 1 (OPN1MW), found in Sciurus carolinensis (Eastern gray squirrel).